The primary structure comprises 340 residues: Phosphoribosylformylglycinamidine cyclo-ligase (340 aa).

This sequence belongs to the AIR synthase family.

Its subcellular location is the cytoplasm. The enzyme catalyses 2-formamido-N(1)-(5-O-phospho-beta-D-ribosyl)acetamidine + ATP = 5-amino-1-(5-phospho-beta-D-ribosyl)imidazole + ADP + phosphate + H(+). It functions in the pathway purine metabolism; IMP biosynthesis via de novo pathway; 5-amino-1-(5-phospho-D-ribosyl)imidazole from N(2)-formyl-N(1)-(5-phospho-D-ribosyl)glycinamide: step 2/2. This Macrococcus caseolyticus (strain JCSC5402) (Macrococcoides caseolyticum) protein is Phosphoribosylformylglycinamidine cyclo-ligase.